A 194-amino-acid polypeptide reads, in one-letter code: Small ribosomal subunit protein uS5 (194 aa).

The S5 DRBM domain occupies Leu-26–Val-89.

It belongs to the universal ribosomal protein uS5 family. In terms of assembly, part of the 30S ribosomal subunit. Contacts proteins S4 and S8.

Functionally, with S4 and S12 plays an important role in translational accuracy. In terms of biological role, located at the back of the 30S subunit body where it stabilizes the conformation of the head with respect to the body. In Persephonella marina (strain DSM 14350 / EX-H1), this protein is Small ribosomal subunit protein uS5.